The primary structure comprises 444 residues: Biotin carboxylase 2 (444 aa).

The Biotin carboxylation domain occupies 1 to 444 (MFTKVLIANR…VTTDFLKQHL (444 aa)). ATP contacts are provided by residues Lys116, Lys158, 164 to 165 (GG), 200 to 203 (EKVI), His208, and His235. Positions 120–317 (RKAMEAAGVP…LVEQQLRIAA (198 aa)) constitute an ATP-grasp domain. Lys237 provides a ligand contact to hydrogencarbonate. Glu275 and Glu288 together coordinate ATP. The Mg(2+) site is built by Glu275, Glu288, and Asn290. Mn(2+)-binding residues include Glu275, Glu288, and Asn290. The hydrogencarbonate site is built by Arg292, Val295, and Arg338. Arg292 is a catalytic residue. Arg338 provides a ligand contact to biotin.

In terms of assembly, acetyl-CoA carboxylase is a heterohexamer of biotin carboxyl carrier protein, biotin carboxylase and the two subunits of carboxyl transferase in a 2:2 complex. Mg(2+) is required as a cofactor. The cofactor is Mn(2+).

It catalyses the reaction N(6)-biotinyl-L-lysyl-[protein] + hydrogencarbonate + ATP = N(6)-carboxybiotinyl-L-lysyl-[protein] + ADP + phosphate + H(+). It functions in the pathway lipid metabolism; malonyl-CoA biosynthesis; malonyl-CoA from acetyl-CoA: step 1/1. This protein is a component of the acetyl coenzyme A carboxylase complex; first, biotin carboxylase catalyzes the carboxylation of the carrier protein and then the transcarboxylase transfers the carboxyl group to form malonyl-CoA. This Bacillus subtilis (strain 168) protein is Biotin carboxylase 2 (accC2).